Consider the following 270-residue polypeptide: Urease accessory protein UreD (270 aa).

This sequence belongs to the UreD family. UreD, UreF and UreG form a complex that acts as a GTP-hydrolysis-dependent molecular chaperone, activating the urease apoprotein by helping to assemble the nickel containing metallocenter of UreC. The UreE protein probably delivers the nickel.

It localises to the cytoplasm. Its function is as follows. Required for maturation of urease via the functional incorporation of the urease nickel metallocenter. The chain is Urease accessory protein UreD from Klebsiella pneumoniae.